Reading from the N-terminus, the 69-residue chain is Cold shock protein CapB (69 aa).

The CSD domain maps to 7–66; sequence GTVKWFNDEKGFGFITPQSGDDLFVHFKAIQSDGFKSLKEGQQVSFIATRGQKGMQAEEV.

It localises to the cytoplasm. In terms of biological role, affects cell viability at low temperatures. This is Cold shock protein CapB (capB) from Pseudomonas fragi.